A 957-amino-acid polypeptide reads, in one-letter code: Glycine dehydrogenase (decarboxylating) 2 (957 aa).

Lysine 707 is modified (N6-(pyridoxal phosphate)lysine).

This sequence belongs to the GcvP family. The glycine cleavage system is composed of four proteins: P, T, L and H. It depends on pyridoxal 5'-phosphate as a cofactor.

The catalysed reaction is N(6)-[(R)-lipoyl]-L-lysyl-[glycine-cleavage complex H protein] + glycine + H(+) = N(6)-[(R)-S(8)-aminomethyldihydrolipoyl]-L-lysyl-[glycine-cleavage complex H protein] + CO2. Functionally, the glycine cleavage system catalyzes the degradation of glycine. The P protein binds the alpha-amino group of glycine through its pyridoxal phosphate cofactor; CO(2) is released and the remaining methylamine moiety is then transferred to the lipoamide cofactor of the H protein. The chain is Glycine dehydrogenase (decarboxylating) 2 (gcvP2) from Pseudomonas putida (strain ATCC 47054 / DSM 6125 / CFBP 8728 / NCIMB 11950 / KT2440).